The sequence spans 560 residues: Involucrin (560 aa).

The span at 1–15 shows a compositional bias: polar residues; the sequence is MSQQHTLPVTLSPAL. Disordered stretches follow at residues 1 to 131, 150 to 359, and 404 to 534; these read MSQQ…KLLD, EQLL…LVQQ, and GQLK…QSAL. Over residues 76 to 91 the composition is skewed to low complexity; that stretch reads EQQQQEPQEQELQQQH. Basic and acidic residues-rich tracts occupy residues 92–115 and 159–172; these read WEQH…KAQR and QEGH…REGQ. Over residues 189-211 the composition is skewed to low complexity; sequence QKGQLELPEQQEGQLELPEQQEG. Composition is skewed to basic and acidic residues over residues 212–231, 252–264, and 274–320; these read QLKH…HQEG, QLKH…KQPE, and KHLE…EHQE. A compositionally biased stretch (low complexity) spans 321–334; sequence GQLGLPEQQVQQLK. Composition is skewed to basic and acidic residues over residues 335-353, 404-420, 454-463, 476-486, and 494-510; these read QLEK…EGQL, GQLK…KHLE, QLKHLEKQEA, KHLEQQEKQLE, and QLKH…DLEQ.

The protein belongs to the involucrin family. Directly or indirectly cross-linked to cornifelin (CNFN). Post-translationally, substrate of transglutaminase. Specific glutamines or lysines are cross-linked to keratins, desmoplakin and to inter involucrin molecules. In terms of tissue distribution, keratinocytes of epidermis and other stratified squamous epithelia.

The protein resides in the cytoplasm. Functionally, part of the insoluble cornified cell envelope (CE) of stratified squamous epithelia. The polypeptide is Involucrin (IVL) (Pan paniscus (Pygmy chimpanzee)).